The chain runs to 225 residues: Jeltraxin (225 aa).

An N-terminal signal peptide occupies residues methionine 1 to alanine 19. Residues glycine 21 to proline 223 form the Pentraxin (PTX) domain. Cysteine 51 and cysteine 112 are oxidised to a cystine. Residues aspartate 75 and asparagine 76 each coordinate Ca(2+). Residue asparagine 87 is glycosylated (N-linked (GlcNAc...) asparagine). Ca(2+) contacts are provided by glutamate 153, glutamine 154, aspartate 155, and glutamine 165. A glycan (N-linked (GlcNAc...) asparagine) is linked at asparagine 207.

As to quaternary structure, homodecamer consisting of two homopentamer units. Pentraxin (or pentaxin) have a discoid arrangement of 5 non-covalently bound subunits. It depends on Ca(2+) as a cofactor. In terms of processing, glycosylated. In terms of tissue distribution, oviduct. Highest expression levels were detected in the pars convoluta with lower levels detected in the pars recta. No expression was detected in the pars uterina.

It localises to the secreted. In terms of biological role, calcium-dependent beta-galactose specific lectin. In Lepidobatrachus laevis (Budgett's frog), this protein is Jeltraxin.